Consider the following 506-residue polypeptide: FAD-linked oxidoreductase chry5 (506 aa).

An N-terminal signal peptide occupies residues 1–17; sequence MHLQALTGLATLAVTAA. The region spanning 59 to 241 is the FAD-binding PCMH-type domain; the sequence is LDKPTVNIVA…TSVTSKTYDA (183 aa). Asn205, Asn272, Asn281, Asn389, and Asn431 each carry an N-linked (GlcNAc...) asparagine glycan.

This sequence belongs to the oxygen-dependent FAD-linked oxidoreductase family. It depends on FAD as a cofactor.

It functions in the pathway pigment biosynthesis. In terms of biological role, FAD-linked oxidoreductase; part of the gene cluster that mediates the biosynthesis of the yellow pigment chrysogine. Pyruvic acid and anthranilic acid are likely substrates for the nonribosomal peptide synthetase chry1/NRPS14, with pyruvic acid adenylated by the first A domain and anthranilic acid by the second. If pyruvic acid and anthranilic acid are merged and released from chry1/NRPS14 by hydrolysis, a subsequent amidation would lead to 2-pyruvoylaminobenzamide. This process is probably catalyzed by the amidotransferase chry2 using glutamine as amino donor. The dehydrogenase chry5 that has a terminal berberine bridge domain for C-N cyclization could catalyze the cyclization of 2-pyruvoylaminobenzamide to yield acetyl-4(3H)-quinazolidinone. A final reduction of acetyl-4(3H)-quinazolidinone catalyzed by the oxidoreductase chry4 would result in chrysogine. In Gibberella zeae (strain ATCC MYA-4620 / CBS 123657 / FGSC 9075 / NRRL 31084 / PH-1) (Wheat head blight fungus), this protein is FAD-linked oxidoreductase chry5.